A 478-amino-acid chain; its full sequence is Sodium-dependent phosphate transport protein 3 (478 aa).

4 N-linked (GlcNAc...) asparagine glycosylation sites follow: asparagine 28, asparagine 47, asparagine 56, and asparagine 69. A run of 10 helical transmembrane segments spans residues 98–118, 130–150, 183–203, 211–231, 273–293, 317–337, 341–361, 363–383, 405–425, and 442–462; these read ISYGIILTLIPSGYLAGIFGA, SLLTLFTPLAADFGVILVIVI, SIAGSGAAFGSFIILCVGGLI, FIFYIFGSIGCVCCVLWFTVI, LPLWAIFMGFFSHFWLCTIII, LPFIAASSCTILGGQMADFLL, LLSLITVRKLFSSLGLLLPSL, AVALPFVTSSYIATIVLLILI, YASFLMGISRGFGLTAGIISS, and NVFFLSAAVNMFGLIFYLIFG.

This sequence belongs to the major facilitator superfamily. Sodium/anion cotransporter family. Expressed in the liver, kidney, placenta, lung and thyroid (at protein level).

It localises to the apical cell membrane. It catalyses the reaction 3 Na(+)(out) + phosphate(out) = 3 Na(+)(in) + phosphate(in). The enzyme catalyses urate(out) + n chloride(in) = urate(in) + n chloride(out). Its function is as follows. Acts as a membrane potential-dependent organic anion transporter, the transport requires a low concentration of chloride ions. Mediates chloride-dependent transport of urate. Can actively transport inorganic phosphate into cells via Na(+) cotransport. This Mus musculus (Mouse) protein is Sodium-dependent phosphate transport protein 3 (Slc17a2).